The following is a 154-amino-acid chain: Superoxide dismutase [Cu-Zn] (154 aa).

Cu cation contacts are provided by H47, H49, and H64. C58 and C147 are disulfide-bonded. 4 residues coordinate Zn(2+): H64, H72, H81, and D84. H121 contributes to the Cu cation binding site. A substrate-binding site is contributed by R144.

Belongs to the Cu-Zn superoxide dismutase family. In terms of assembly, homodimer. Requires Cu cation as cofactor. The cofactor is Zn(2+).

The protein resides in the cytoplasm. It carries out the reaction 2 superoxide + 2 H(+) = H2O2 + O2. Its function is as follows. Destroys radicals which are normally produced within the cells and which are toxic to biological systems. This is Superoxide dismutase [Cu-Zn] (sodC) from Aspergillus fumigatus (strain ATCC MYA-4609 / CBS 101355 / FGSC A1100 / Af293) (Neosartorya fumigata).